A 118-amino-acid polypeptide reads, in one-letter code: Large ribosomal subunit protein bL20 (118 aa).

This sequence belongs to the bacterial ribosomal protein bL20 family.

In terms of biological role, binds directly to 23S ribosomal RNA and is necessary for the in vitro assembly process of the 50S ribosomal subunit. It is not involved in the protein synthesizing functions of that subunit. The polypeptide is Large ribosomal subunit protein bL20 (Ralstonia nicotianae (strain ATCC BAA-1114 / GMI1000) (Ralstonia solanacearum)).